Here is a 238-residue protein sequence, read N- to C-terminus: 15,16-dihydrobiliverdin:ferredoxin oxidoreductase (238 aa).

Belongs to the HY2 family.

It carries out the reaction 15,16-dihydrobiliverdin + oxidized 2[4Fe-4S]-[ferredoxin] = biliverdin IXalpha + reduced 2[4Fe-4S]-[ferredoxin] + 2 H(+). Functionally, catalyzes the two-electron reduction of biliverdin IX-alpha at the C15 methine bridge. This Prochlorococcus marinus (strain MIT 9211) protein is 15,16-dihydrobiliverdin:ferredoxin oxidoreductase.